The following is a 189-amino-acid chain: Elongation factor P (189 aa).

K34 carries the N6-(3,6-diaminohexanoyl)-5-hydroxylysine modification.

The protein belongs to the elongation factor P family. In terms of processing, may be beta-lysylated on the epsilon-amino group of Lys-34 by the combined action of EpmA and EpmB, and then hydroxylated on the C5 position of the same residue by EpmC (if this protein is present). Lysylation is critical for the stimulatory effect of EF-P on peptide-bond formation. The lysylation moiety may extend toward the peptidyltransferase center and stabilize the terminal 3-CCA end of the tRNA. Hydroxylation of the C5 position on Lys-34 may allow additional potential stabilizing hydrogen-bond interactions with the P-tRNA.

The protein resides in the cytoplasm. It participates in protein biosynthesis; polypeptide chain elongation. Functionally, involved in peptide bond synthesis. Alleviates ribosome stalling that occurs when 3 or more consecutive Pro residues or the sequence PPG is present in a protein, possibly by augmenting the peptidyl transferase activity of the ribosome. Modification of Lys-34 is required for alleviation. This is Elongation factor P from Dichelobacter nodosus (strain VCS1703A).